A 389-amino-acid chain; its full sequence is Probable nitrate transporter NarT (389 aa).

Helical transmembrane passes span 14-34, 45-65, 69-89, 97-117, 139-159, 161-181, 211-231, 246-266, 268-288, 294-314, 331-351, and 353-373; these read TLSL…MPFI, ISII…PFGY, IVGA…PIFF, GMLM…SVGV, GNIG…IIGW, TTVR…FIFG, WYFI…NYLV, GVFI…GDKF, AVKV…ILGI, LFTV…GLIF, IVSM…TYVA, and LTGS…IALF.

Belongs to the major facilitator superfamily. Nitrate/nitrite porter (TC 2.A.1.8) family.

It is found in the cell membrane. Probably required for nitrate uptake under anoxic conditions. Also possibly involved in excretion of nitrite produced by the dissimilatory reduction of nitrate. The protein is Probable nitrate transporter NarT (narT) of Staphylococcus aureus (strain MRSA252).